Reading from the N-terminus, the 215-residue chain is MRTGIIAQKIGMTSVFNDKGERISLTLVKVDDCQVVGHKTLEKHGYNALVVGVKDKKISRVTKPMRQVFANAKISPKTKLKEFRISEENFIDIAASLEVDHFTAGQFVDITATTIGKGFAGSMKRHNFRGLEASHGVSISHRSHGSTGQRQDPGKVFKGKKMAGHMGCNQVTIQNLKIFAVDKERKLIMIQGSIPGHKNSYLSVKDAIKKISITV.

The interval 136–155 is disordered; that stretch reads GVSISHRSHGSTGQRQDPGK. N5-methylglutamine is present on Q151.

Belongs to the universal ribosomal protein uL3 family. In terms of assembly, part of the 50S ribosomal subunit. Forms a cluster with proteins L14 and L19. In terms of processing, methylated by PrmB.

Its function is as follows. One of the primary rRNA binding proteins, it binds directly near the 3'-end of the 23S rRNA, where it nucleates assembly of the 50S subunit. The chain is Large ribosomal subunit protein uL3 from Rickettsia africae (strain ESF-5).